The sequence spans 140 residues: MNIDDYIEKLEIQKEGFFYKCPYCNYTNADVKAIKKHIKSKHYDIIAKEVENLNKQNKPQRKPMKKQPKKKDDDYKDYMLLFAHKKKCKIYLDNGMIVEGTVKAKDRFNIMVLDAKVDDKEVERIIIQKGHIVALIPLEE.

The C2H2-type zinc-finger motif lies at 21-42 (CPYCNYTNADVKAIKKHIKSKH).

This sequence to M.jannaschii MJECL27.

This is an uncharacterized protein from Methanocaldococcus jannaschii (strain ATCC 43067 / DSM 2661 / JAL-1 / JCM 10045 / NBRC 100440) (Methanococcus jannaschii).